Consider the following 227-residue polypeptide: Lipoprotein-releasing system ATP-binding protein LolD (227 aa).

An ABC transporter domain is found at 7 to 227 (LKLTGVERHY…TISDGKVVEF (221 aa)). An ATP-binding site is contributed by 43–50 (APSGTGKS).

It belongs to the ABC transporter superfamily. Lipoprotein translocase (TC 3.A.1.125) family. In terms of assembly, the complex is composed of two ATP-binding proteins (LolD) and two transmembrane proteins (LolC and LolE).

The protein localises to the cell inner membrane. Its function is as follows. Part of the ABC transporter complex LolCDE involved in the translocation of mature outer membrane-directed lipoproteins, from the inner membrane to the periplasmic chaperone, LolA. Responsible for the formation of the LolA-lipoprotein complex in an ATP-dependent manner. The chain is Lipoprotein-releasing system ATP-binding protein LolD from Rhizobium etli (strain ATCC 51251 / DSM 11541 / JCM 21823 / NBRC 15573 / CFN 42).